The primary structure comprises 164 residues: Vesiculogenesis and immune response regulator (164 aa).

Could be O-mannosylated. Is likely mannosylated on Thr-61 when overexpressed in M.smegmatis.

It localises to the cell inner membrane. Its subcellular location is the cytoplasm. Its function is as follows. Virulence factor that regulates vesiculogenesis. Acts by regulating the production of mycobacterial membrane vesicles (MV) bearing Toll-like receptor 2 (TLR2) ligands, including the lipoproteins LpqH, a major host TLR2 agonist, and SodC. By restraining the release of most of the material that activates host cells through TLR2, VirR reduces the immunostimulant potential of M.tuberculosis and increases its virulence. May contribute to cell envelope integrity. Functionally, when overexpressed in M.smegmatis, it modulates the production of IL-10, IL-12 p40 and TNF-alpha by RAW264.7 macrophages and it decreases the killing of M.smegmatis. The chain is Vesiculogenesis and immune response regulator from Mycobacterium tuberculosis (strain ATCC 25618 / H37Rv).